Consider the following 523-residue polypeptide: Leghemoglobin reductase (523 aa).

A mitochondrion-targeting transit peptide spans 1–30 (MAMASLARRKAYAVVSSSRSSVFLTSLRGF). FAD contacts are provided by residues 66–75 (EKRGTLGGTC), lysine 84, glycine 148, and 177–179 (TGS). A disulfide bond links cysteine 75 and cysteine 80. Residues 214–221 (GAGYIGLE), glutamate 237, valine 271, and glycine 306 contribute to the NAD(+) site. Residues aspartate 347 and 353-356 (MLAH) contribute to the FAD site. Histidine 479 acts as the Proton acceptor in catalysis.

It belongs to the class-I pyridine nucleotide-disulfide oxidoreductase family. In terms of assembly, homodimer. The cofactor is FAD.

Its subcellular location is the mitochondrion. The enzyme catalyses 2 Fe(III)-[leghemoglobin] + NADH = 2 Fe(II)-[leghemoglobin] + NAD(+) + H(+). It catalyses the reaction 2 Fe(III)-[leghemoglobin] + NADPH = 2 Fe(II)-[leghemoglobin] + NADP(+) + H(+). Functionally, reduces ferric leghemoglobin (Lb) to ferrous Lb. The sequence is that of Leghemoglobin reductase (FLBR) from Vigna unguiculata (Cowpea).